A 241-amino-acid chain; its full sequence is MALMLVLFFLAAVLPPSLLQDNSQENSLEKLSTSKKSVQEEIVSKHNQLRRKVSPSGSDLLNMEWNYDAQVNAQQRADKCTFSHSPIELRTTNLKCGENLFMSSYLVPWSSVIQGWYNESKGLIFGVGPKQNVSVVGHHTQVVWKSNLQVACGVAECPENPLRYFYVCRYCPVLNYSGHYPSRPYLAYTARAPCASCPDRCEDGLCTKSCQYKDMSFWCKRLEYVCKHPGLKKRCLATCQC.

A signal peptide spans 1 to 19 (MALMLVLFFLAAVLPPSLL). An SCP domain is found at 44-170 (SKHNQLRRKV…PLRYFYVCRY (127 aa)). Asn118, Asn132, and Asn175 each carry an N-linked (GlcNAc...) asparagine glycan. Disulfide bonds link Cys194–Cys201, Cys197–Cys206, Cys210–Cys241, Cys219–Cys235, and Cys226–Cys239. Residues 210–241 (CQYKDMSFWCKRLEYVCKHPGLKKRCLATCQC) form the ShKT domain.

This sequence belongs to the CRISP family. Interacts with A1BG. Interacts with KNG1 isoform LMW. As to expression, expressed in submandibular gland.

Its subcellular location is the cytoplasmic vesicle. The protein localises to the secretory vesicle. Its function is as follows. This protein is supposed to help spermatozoa undergo functional maturation while they move from the testis to the ductus deferens. The protein is Cysteine-rich secretory protein 3 (Crisp3) of Mus musculus (Mouse).